Here is a 516-residue protein sequence, read N- to C-terminus: 2,3-bisphosphoglycerate-independent phosphoglycerate mutase (516 aa).

The Mn(2+) site is built by aspartate 15 and serine 65. The active-site Phosphoserine intermediate is the serine 65. Substrate-binding positions include histidine 126, 156–157 (RD), arginine 188, arginine 194, 263–266 (RADR), and lysine 336. Mn(2+) contacts are provided by aspartate 403, histidine 407, aspartate 444, histidine 445, and histidine 463.

Belongs to the BPG-independent phosphoglycerate mutase family. In terms of assembly, monomer. The cofactor is Mn(2+).

It carries out the reaction (2R)-2-phosphoglycerate = (2R)-3-phosphoglycerate. It participates in carbohydrate degradation; glycolysis; pyruvate from D-glyceraldehyde 3-phosphate: step 3/5. Catalyzes the interconversion of 2-phosphoglycerate and 3-phosphoglycerate. This Francisella tularensis subsp. holarctica (strain OSU18) protein is 2,3-bisphosphoglycerate-independent phosphoglycerate mutase.